Reading from the N-terminus, the 1034-residue chain is MPLCPLLLLALGLRLTGTLNSNDPNVCTFWESFTTTTKESHLRPFSLLPAESCHRPWEDPHTCAQPTVVYRTVYRQVVKMDSRPRLQCCRGYYESRGACVPLCAQECVHGRCVAPNQCQCAPGWRGGDCSSECAPGMWGPQCDKFCHCGNNSSCDPKSGTCFCPSGLQPPNCLQPCPAGHYGPACQFDCQCYGASCDPQDGACFCPPGRAGPSCNVPCSQGTDGFFCPRTYPCQNGGVPQGSQGSCSCPPGWMGVICSLPCPEGFHGPNCTQECRCHNGGLCDRFTGQCHCAPGYIGDRCQEECPVGRFGQDCAETCDCAPGARCFPANGACLCEHGFTGDRCTERLCPDGRYGLSCQEPCTCDPEHSLSCHPMHGECSCQPGWAGLHCNESCPQDTHGPGCQEHCLCLHGGLCLADSGLCRCAPGYTGPHCANLCPPDTYGINCSSRCSCENAIACSPIDGTCICKEGWQRGNCSVPCPLGTWGFNCNASCQCAHDGVCSPQTGACTCTPGWHGAHCQLPCPKGQFGEGCASVCDCDHSDGCDPVHGQCRCQAGWMGTRCHLPCPEGFWGANCSNTCTCKNGGTCVSENGNCVCAPGFRGPSCQRPCPPGRYGKRCVQCKCNNNHSSCHPSDGTCSCLAGWTGPDCSEACPPGHWGLKCSQLCQCHHGGTCHPQDGSCICTPGWTGPNCLEGCPPRMFGVNCSQLCQCDLGEMCHPETGACVCPPGHSGADCKMGSQESFTIMPTSPVTHNSLGAVIGIAVLGTLVVALIALFIGYRQWQKGKEHEHLAVAYSTGRLDGSDYVMPDVSPSYSHYYSNPSYHTLSQCSPNPPPPNKVPGSQLFVSSQAPERPSRAHGRENHVTLPADWKHRREPHERGASHLDRSYSCSYSHRNGPGPFCHKGPISEEGLGASVMSLSSENPYATIRDLPSLPGEPRESGYVEMKGPPSVSPPRQSLHLRDRQQRQLQPQRDSGTYEQPSPLSHNEESLGSTPPLPPGLPPGHYDSPKNSHIPGHYDLPPVRHPPSPPSRRQDR.

An N-terminal signal peptide occupies residues 1–18; the sequence is MPLCPLLLLALGLRLTGT. Residues 19–754 lie on the Extracellular side of the membrane; it reads LNSNDPNVCT…PTSPVTHNSL (736 aa). The EMI domain maps to 23 to 101; sequence DPNVCTFWES…YYESRGACVP (79 aa). 3 disulfide bridges follow: Cys-27/Cys-89, Cys-53/Cys-63, and Cys-88/Cys-99. An N-linked (GlcNAc...) asparagine glycan is attached at Asn-150. EGF-like domains are found at residues 181-215, 223-258, 266-301, 309-344, and 398-433; these read YGPA…PSCN, DGFF…VICS, HGPN…DRCQ, FGQD…DRCT, and HGPG…PHCA. Intrachain disulfides connect Cys-185–Cys-196, Cys-189–Cys-203, Cys-205–Cys-214, Cys-233–Cys-246, and Cys-248–Cys-257. Residue Asn-269 is glycosylated (N-linked (GlcNAc...) asparagine). 9 disulfides stabilise this stretch: Cys-270/Cys-282, Cys-276/Cys-289, Cys-291/Cys-300, Cys-313/Cys-325, Cys-319/Cys-332, Cys-334/Cys-343, Cys-402/Cys-414, Cys-408/Cys-421, and Cys-423/Cys-432. Asn-474 carries an N-linked (GlcNAc...) asparagine glycan. EGF-like domains are found at residues 484-519, 575-605, 613-648, and 656-691; these read WGFN…AHCQ, SNTC…PSCQ, YGKR…PDCS, and WGLK…PNCL. Intrachain disulfides connect Cys-488/Cys-500, Cys-494/Cys-507, Cys-509/Cys-518, Cys-578/Cys-586, Cys-580/Cys-593, Cys-595/Cys-604, Cys-617/Cys-629, Cys-622/Cys-636, Cys-638/Cys-647, Cys-660/Cys-672, Cys-666/Cys-679, and Cys-681/Cys-690. A helical membrane pass occupies residues 755-775; the sequence is GAVIGIAVLGTLVVALIALFI. The Cytoplasmic segment spans residues 776 to 1034; the sequence is GYRQWQKGKE…PSPPSRRQDR (259 aa). The interval 823-883 is disordered; that stretch reads TLSQCSPNPP…PHERGASHLD (61 aa). Residues 851 to 883 show a composition bias toward basic and acidic residues; sequence RPSRAHGRENHVTLPADWKHRREPHERGASHLD. Tyr-923 is modified (phosphotyrosine). Residues 925–1034 form a disordered region; that stretch reads TIRDLPSLPG…PSPPSRRQDR (110 aa). Ser-951 bears the Phosphoserine mark. Over residues 972 to 991 the composition is skewed to polar residues; the sequence is DSGTYEQPSPLSHNEESLGS. A Phosphoserine modification is found at Ser-1026.

It belongs to the MEGF family. In terms of assembly, interacts with SHC2 upon its aggregation-induced tyrosine phosphorylation. Interacts (via extracellular domain) with SVEP1. Phosphorylated in the intracellular domain on tyrosine residues. Phosphorylated on tyrosine residues by SRC. Tyrosine phosphorylation is detected upon platelet aggregation stimulated by collagen, TRAP and thrombin and platelet-platelet contacts but not after platelet activation. Tyrosine phosphorylation enhanced its association with SHC1 and SHC2. Phosphorylated in the intracellular domain on tyrosine residues. Phosphorylated when in the presence of SVEP1. Expressed in thymocytes, bone marrow stromal and osteogenic cells (at protein level). Strongly expressed in kidney and heart. Moderately expressed in lung, spleen, thymus, liver, brain, testis, skin and stomach. Expressed in hematopoietic stem progenitor cells.

The protein localises to the cell membrane. It is found in the cell projection. The protein resides in the lamellipodium. Required for SVEP1-mediated platelet activation, via its interaction with SVEP1 and subsequent activation of AKT/mTOR signaling. May be involved in the early stages of hematopoiesis. The sequence is that of Platelet endothelial aggregation receptor 1 (Pear1) from Mus musculus (Mouse).